Here is a 430-residue protein sequence, read N- to C-terminus: MANVVVVGAQWGDEGKGKIVDWLSERADVIARFQGGHNAGHTLVIDGKVYKLSLLPSGIVRPGKLSVIGNGVVLDPWHLVQEIAKLRADGVEISPESLMIAENAVLILPLHGELDRARESQNSVAKIGTTGRGIGPAYEDKVGRRAIRVADLADEATLALRVDRLMVHHDALRRGLGIEPVDREALLAQLREIAPQVLPYAKPVWKVMNEMRKAGKRILFEGAQGALLDIDFGTYPYVTSSNVIAGQAATGTGIGPGAIGFVLGIVKAYTTRVGEGPFPAELQDADGERLGERGREFGTVTGRKRRCGWFDAVLVRQTCATSGVSGIALTKLDVLDGFETLKICVGYELDGERLDHLPIAADQQARCTPIFEELEGWSESTAGARSWADLPGAAVKYVRRIEELIQCPVALLSTSPERDDTILVTDPFED.

Residues 12–18 (GDEGKGK) and 40–42 (GHT) contribute to the GTP site. The active-site Proton acceptor is the D13. D13 and G40 together coordinate Mg(2+). IMP is bound by residues 13 to 16 (DEGK), 38 to 41 (NAGH), T130, R144, Q224, T239, and R303. H41 acts as the Proton donor in catalysis. 299–305 (TVTGRKR) contributes to the substrate binding site. GTP is bound by residues R305, 331–333 (KLD), and 413–415 (STS).

The protein belongs to the adenylosuccinate synthetase family. Homodimer. Mg(2+) serves as cofactor.

Its subcellular location is the cytoplasm. The catalysed reaction is IMP + L-aspartate + GTP = N(6)-(1,2-dicarboxyethyl)-AMP + GDP + phosphate + 2 H(+). Its pathway is purine metabolism; AMP biosynthesis via de novo pathway; AMP from IMP: step 1/2. Plays an important role in the de novo pathway of purine nucleotide biosynthesis. Catalyzes the first committed step in the biosynthesis of AMP from IMP. The chain is Adenylosuccinate synthetase from Cereibacter sphaeroides (strain KD131 / KCTC 12085) (Rhodobacter sphaeroides).